Here is a 319-residue protein sequence, read N- to C-terminus: Tetrahydromethanopterin S-methyltransferase subunit H (319 aa).

This sequence belongs to the MtrH family. The complex is composed of 8 subunits; MtrA, MtrB, MtrC, MtrD, MtrE, MtrF, MtrG and MtrH.

It catalyses the reaction 5-methyl-5,6,7,8-tetrahydromethanopterin + coenzyme M + 2 Na(+)(in) = 5,6,7,8-tetrahydromethanopterin + methyl-coenzyme M + 2 Na(+)(out). The protein operates within one-carbon metabolism; methanogenesis from CO(2); methyl-coenzyme M from 5,10-methylene-5,6,7,8-tetrahydromethanopterin: step 2/2. Functionally, part of a complex that catalyzes the formation of methyl-coenzyme M and tetrahydromethanopterin from coenzyme M and methyl-tetrahydromethanopterin. This is an energy-conserving, sodium-ion translocating step. MtrH catalyzes the transfer of the methyl group from methyl-tetrahydromethanopterin to the corrinoid prosthetic group of MtrA. In Methanococcus aeolicus (strain ATCC BAA-1280 / DSM 17508 / OCM 812 / Nankai-3), this protein is Tetrahydromethanopterin S-methyltransferase subunit H.